The sequence spans 391 residues: Ectodysplasin-A (391 aa).

Residues Met1–Leu41 are Cytoplasmic-facing. The chain crosses the membrane as a helical; Signal-anchor for type II membrane protein span at residues Leu42–Leu62. Residues Glu63–Ser391 are Extracellular-facing. Disordered regions lie at residues Gly73 to Ser127 and Tyr146 to Glu245. Low complexity predominate over residues Thr86–Pro101. Residues Ile102–Gln113 show a composition bias toward polar residues. Residues Gly180–Pro229 enclose the Collagen-like domain. Pro residues-rich tracts occupy residues Pro181–Pro203 and Pro216–Pro228. Positions Ala249–Leu385 constitute a THD domain. Asn313 carries an N-linked (GlcNAc...) asparagine glycan. An intrachain disulfide couples Cys332 to Cys346. N-linked (GlcNAc...) asparagine glycosylation is present at Asn372.

Belongs to the tumor necrosis factor family. As to quaternary structure, homotrimer. The homotrimers may then dimerize and form higher-order oligomers. Post-translationally, N-glycosylated. In terms of processing, processing by furin produces a secreted form. In terms of tissue distribution, not abundant; expressed in specific cell types of ectodermal (but not mesodermal) origin of keratinocytes, hair follicles, sweat glands. Also in adult heart, liver, muscle, pancreas, prostate, fetal liver, uterus, small intestine and umbilical cord.

It is found in the cell membrane. The protein resides in the secreted. Functionally, cytokine which is involved in epithelial-mesenchymal signaling during morphogenesis of ectodermal organs. Functions as a ligand activating the DEATH-domain containing receptors EDAR and EDA2R. May also play a role in cell adhesion. In terms of biological role, binds only to the receptor EDAR, while isoform 3 binds exclusively to the receptor EDA2R. Its function is as follows. Binds only to the receptor EDA2R. This chain is Ectodysplasin-A (EDA), found in Homo sapiens (Human).